Here is an 849-residue protein sequence, read N- to C-terminus: G-type lectin S-receptor-like serine/threonine-protein kinase B120 (849 aa).

The N-terminal stretch at 1–25 (MRFFRKTSLYLSLFLYFFLYESSMA) is a signal peptide. The Bulb-type lectin domain occupies 26-153 (ANTIRRGESL…DTDRPIWESF (128 aa)). Residues 26-438 (ANTIRRGESL…SEVGENRKTK (413 aa)) lie on the Extracellular side of the membrane. N-linked (GlcNAc...) asparagine glycosylation is found at N110, N191, N210, N230, N273, and N282. The region spanning 295–332 (PDSECDQYNRCGKFGICDMKGSNGICSCIHGYEQVSVG) is the EGF-like; atypical domain. Disulfide bonds link C299–C311 and C305–C320. N-linked (GlcNAc...) asparagine glycans are attached at residues N333, N349, and N388. The PAN domain occupies 346–427 (CERNISVGED…GGSSLHIRLA (82 aa)). 2 disulfide bridges follow: C381–C402 and C385–C391. The helical transmembrane segment at 439–459 (IAVIVAVLVGVILIGIFALLL) threads the bilayer. The Cytoplasmic segment spans residues 460–849 (WRFKRKKDVS…EITSTVVLGR (390 aa)). Positions 529–814 (FCKENELGRG…TLAAPRQPTF (286 aa)) constitute a Protein kinase domain. ATP contacts are provided by residues 535 to 543 (LGRGGFGPV) and K557. At S563 the chain carries Phosphoserine. Residues 618-635 (TKQALIDWKLRFSIIEGI) are caM-binding. Residue D654 is the Proton acceptor of the active site. Residues S658 and S671 each carry the phosphoserine modification. Residue T688 is modified to Phosphothreonine. A phosphoserine mark is found at S732 and S837. T844 bears the Phosphothreonine mark.

Belongs to the protein kinase superfamily. Ser/Thr protein kinase family.

Its subcellular location is the cell membrane. The enzyme catalyses L-seryl-[protein] + ATP = O-phospho-L-seryl-[protein] + ADP + H(+). It carries out the reaction L-threonyl-[protein] + ATP = O-phospho-L-threonyl-[protein] + ADP + H(+). The chain is G-type lectin S-receptor-like serine/threonine-protein kinase B120 (B120) from Arabidopsis thaliana (Mouse-ear cress).